The chain runs to 113 residues: MVAPVNGIASALQQMQAMAAQAAGGASPATSLAGSGAASAGSFASAMKASLDKISGDQQKALGEAHAFEIGAQNVSLNDVMVDMQKANIGFQFGLQVRNKLVSAYNEIMQMSV.

The protein belongs to the FliE family.

Its subcellular location is the bacterial flagellum basal body. This Burkholderia mallei (strain NCTC 10247) protein is Flagellar hook-basal body complex protein FliE.